The sequence spans 79 residues: Sec-independent protein translocase protein TatA (79 aa).

A helical transmembrane segment spans residues 1–21 (MGGFTSIWHWVIVLLVIVLLF). Residues 48-79 (EEEAKNEPKTLDAQATQTKVHESSEIKSKQES) are disordered. The span at 66–79 (KVHESSEIKSKQES) shows a compositional bias: basic and acidic residues.

It belongs to the TatA/E family. The Tat system comprises two distinct complexes: a TatABC complex, containing multiple copies of TatA, TatB and TatC subunits, and a separate TatA complex, containing only TatA subunits. Substrates initially bind to the TatABC complex, which probably triggers association of the separate TatA complex to form the active translocon.

It localises to the cell inner membrane. Functionally, part of the twin-arginine translocation (Tat) system that transports large folded proteins containing a characteristic twin-arginine motif in their signal peptide across membranes. TatA could form the protein-conducting channel of the Tat system. In Helicobacter pylori (strain ATCC 700392 / 26695) (Campylobacter pylori), this protein is Sec-independent protein translocase protein TatA.